Reading from the N-terminus, the 572-residue chain is MRTTQYLLSTLKETPADAEVISHQLMLRAGMIRKLASGLYTWLPTGLRVLKKVENIVREEMNNAGAIEISMPVVQPADLWQESGRWEQYGPELLRLVDRSDRPFVLGPTHEEVITDLIRNELSSYKQLPLNLFQIQTKFRDEVRPRFGVMRSREFIMKDAYSFHTSQGSLQETYDAMYRAYSQSFSRMGLDFRAVQADTGSIGGSASHEFQVLAQSGEDDIVFSTGSDYAANIEMAEALPPAGGRADATQERVQFATPEAKTIADLVEQFTLPIEKTVKTLMVKATKESGHTLVALLVRGDHELNEIKAEKIDIVAAPLTFATEEEIRALVNAGPGSLGPVGLNMPIVADRTVAAMSDFSAGANIDGQHFSGINWQRDLPLPRIADIRNVVEGDASPDGKGTLLIKRGIEVGHIFQLGTKYSEAMKASVQGEDGRNQTLTMGCYGIGITRIVAAAIEQNHDERGIIWSPALAPFQVAILPMNMQKSFRVKELAEALYQQLRAKGIDVILDDRKERPGVMFADMELIGVPHTIVIGERNLDNDEIEYKARRGGEKRLIKTDEIVDFLMAELAQ.

It belongs to the class-II aminoacyl-tRNA synthetase family. ProS type 1 subfamily. In terms of assembly, homodimer.

Its subcellular location is the cytoplasm. The catalysed reaction is tRNA(Pro) + L-proline + ATP = L-prolyl-tRNA(Pro) + AMP + diphosphate. Its function is as follows. Catalyzes the attachment of proline to tRNA(Pro) in a two-step reaction: proline is first activated by ATP to form Pro-AMP and then transferred to the acceptor end of tRNA(Pro). As ProRS can inadvertently accommodate and process non-cognate amino acids such as alanine and cysteine, to avoid such errors it has two additional distinct editing activities against alanine. One activity is designated as 'pretransfer' editing and involves the tRNA(Pro)-independent hydrolysis of activated Ala-AMP. The other activity is designated 'posttransfer' editing and involves deacylation of mischarged Ala-tRNA(Pro). The misacylated Cys-tRNA(Pro) is not edited by ProRS. The protein is Proline--tRNA ligase of Erwinia tasmaniensis (strain DSM 17950 / CFBP 7177 / CIP 109463 / NCPPB 4357 / Et1/99).